We begin with the raw amino-acid sequence, 444 residues long: Homogentisate 1,2-dioxygenase (444 aa).

Histidine 298 (proton acceptor) is an active-site residue. Residues histidine 341 and glutamate 347 each coordinate Fe cation. Positions 356 and 377 each coordinate homogentisate. Histidine 377 contacts Fe cation.

Belongs to the homogentisate dioxygenase family. In terms of assembly, hexamer; dimer of trimers. Fe cation is required as a cofactor.

The enzyme catalyses homogentisate + O2 = 4-maleylacetoacetate + H(+). It functions in the pathway amino-acid degradation; L-phenylalanine degradation; acetoacetate and fumarate from L-phenylalanine: step 4/6. Its function is as follows. Involved in the catabolism of homogentisate (2,5-dihydroxyphenylacetate or 2,5-OH-PhAc), a central intermediate in the degradation of phenylalanine and tyrosine. Catalyzes the oxidative ring cleavage of the aromatic ring of homogentisate to yield maleylacetoacetate. The chain is Homogentisate 1,2-dioxygenase from Burkholderia orbicola (strain AU 1054).